The sequence spans 168 residues: Photosystem I assembly protein Ycf3 (168 aa).

TPR repeat units follow at residues A35–P68, S72–L105, and G120–N153.

This sequence belongs to the Ycf3 family.

It is found in the plastid. The protein resides in the chloroplast thylakoid membrane. Its function is as follows. Essential for the assembly of the photosystem I (PSI) complex. May act as a chaperone-like factor to guide the assembly of the PSI subunits. The polypeptide is Photosystem I assembly protein Ycf3 (Phalaenopsis aphrodite subsp. formosana (Moth orchid)).